A 393-amino-acid chain; its full sequence is Nucleosome assembly protein 1-like 1-B (393 aa).

Residues 1 to 10 (MANIDNKEQT) show a composition bias toward basic and acidic residues. The interval 1-38 (MANIDNKEQTELDQQDMEDVEDVEEEETGEEANSKARQ) is disordered. Acidic residues predominate over residues 11–30 (ELDQQDMEDVEDVEEEETGE). The NAP1L motif motif lies at 126–151 (YEPTEEECEWKVDEEEDIAEDLKEKA). A Nuclear localization signal motif is present at residues 274–280 (IKKKQKH). The segment covering 347–377 (AIEDDDDDYDEEGEEADDEEGEEEADEDHDP) has biased composition (acidic residues). The segment at 347–393 (AIEDDDDDYDEEGEEADDEEGEEEADEDHDPDFDPKKAQNPAECKQQ) is disordered.

This sequence belongs to the nucleosome assembly protein (NAP) family. Forms homomultimers. Interacts with histone b4. Interacts with the B-type cyclins ccnb1 and ccnb2. In terms of processing, phosphorylated by cyclin B-cdc2 kinase complexes.

It localises to the cytoplasm. The protein resides in the nucleus. In terms of biological role, acts as a chaperone for the linker histone to facilitate deposition of histone B4 onto linker DNA. Required for both remodeling of sperm chromatin into nucleosomes, and linker histone binding to nucleosome core dimers. Plays a role in tissue-specific gene regulation. Required for primitive hemopoiesis, acting upstream of tal1/scl. The sequence is that of Nucleosome assembly protein 1-like 1-B (nap1l1-b) from Xenopus laevis (African clawed frog).